Here is a 417-residue protein sequence, read N- to C-terminus: MEVNPPKQEHLLALKVMRLTKPTLFTNIPVTCEERDLPGDLFNQLMRDDPSTVNGAEVLMLGEMLTLPQNFGNIFLGETFSSYISVHNDSNQVVKDILVKADLQTSSQRLNLSASNAAVAELKPDCCIDDVIHHEVKEIGTHILVCAVSYTTQAGEKMYFRKFFKFQVLKPLDVKTKFYNAESDLSSVTDEVFLEAQIQNMTTSPMFMEKVSLEPSIMYNVTELNSVSQAGESVSTFGSRAYLQPMDTRQYLYCLKPKKEFAEKAGIIKGVTVIGKLDIVWKTNLGERGRLQTSQLQRMAPGYGDVRLSLEAIPDTVNLEEPFHITCKITNCSERTMDLVLEMCNTNSIHWCGISGRQLGKLHPSSSLCLALTLLSSVQGLQSISGLRLTDTFLKRTYEYDDIAQVCVISSAIKVES.

The protein belongs to the TRAPPC13 family. As to quaternary structure, part of the multisubunit TRAPP (transport protein particle) complex.

The polypeptide is Trafficking protein particle complex subunit 13 (TRAPPC13) (Pongo abelii (Sumatran orangutan)).